The chain runs to 286 residues: Protease HtpX (286 aa).

2 consecutive transmembrane segments (helical) span residues 4–24 (ILLF…ILSL) and 33–53 (TGLL…SLFL). His-139 lines the Zn(2+) pocket. Residue Glu-140 is part of the active site. His-143 is a binding site for Zn(2+). The next 2 helical transmembrane spans lie at 147-167 (GDMV…IFVS) and 186-206 (IYFL…SMIA). A Zn(2+)-binding site is contributed by Glu-214.

This sequence belongs to the peptidase M48B family. Requires Zn(2+) as cofactor.

The protein localises to the cell inner membrane. The polypeptide is Protease HtpX (Pasteurella multocida (strain Pm70)).